Consider the following 367-residue polypeptide: MRPIKASISADAMAHNLRVARRHAGAARVFAVVKANAYGHGLSRALRAFGAADGFAVLTLEEAASLRQMGVDKPILLLEGIFDAGEIAACAELDLWPVLHHARQLDWLEQQRPARALEVFLKFDSGMHRLGFPLAEHAEVVARVRALAGVARVTLMTHFAQADDSAGVAWQLQPFREALDGHGLPWSSANSAALMRYPETVGDWVRPGIMLYGASPFTDVPASGLGLEPAMTLRSEIIAVQTLAAGEGIGYGQTFRADKPMRAGVVACGYADGYPRHAPTGTPVVVDGRRTRTLGRVSMDMLCVDLSECPAAGVGSAVVLWGDGLPVDDVAAAAGTSSYELLCALAPRVPIEEVGRNQEAGRGFGNE.

The active-site Proton acceptor; specific for D-alanine is lysine 34. Residue lysine 34 is modified to N6-(pyridoxal phosphate)lysine. Arginine 129 serves as a coordination point for substrate. The active-site Proton acceptor; specific for L-alanine is the tyrosine 251. Methionine 299 contributes to the substrate binding site.

It belongs to the alanine racemase family. Pyridoxal 5'-phosphate serves as cofactor.

It catalyses the reaction L-alanine = D-alanine. It functions in the pathway amino-acid biosynthesis; D-alanine biosynthesis; D-alanine from L-alanine: step 1/1. Functionally, catalyzes the interconversion of L-alanine and D-alanine. May also act on other amino acids. The sequence is that of Alanine racemase (alr) from Thiobacillus denitrificans (strain ATCC 25259 / T1).